Consider the following 511-residue polypeptide: Histidine ammonia-lyase (511 aa).

A cross-link (5-imidazolinone (Ala-Gly)) is located at residues 142-144 (ASG). 2,3-didehydroalanine (Ser) is present on Ser-143.

The protein belongs to the PAL/histidase family. In terms of processing, contains an active site 4-methylidene-imidazol-5-one (MIO), which is formed autocatalytically by cyclization and dehydration of residues Ala-Ser-Gly.

The protein localises to the cytoplasm. The enzyme catalyses L-histidine = trans-urocanate + NH4(+). It participates in amino-acid degradation; L-histidine degradation into L-glutamate; N-formimidoyl-L-glutamate from L-histidine: step 1/3. This chain is Histidine ammonia-lyase, found in Caulobacter sp. (strain K31).